The sequence spans 338 residues: Lipoate-protein ligase A (338 aa).

The region spanning 29–216 (DPNQRVLFLW…AFFSHYGERV (188 aa)) is the BPL/LPL catalytic domain. ATP contacts are provided by residues arginine 71, 76 to 79 (GAVF), and lysine 134. A (R)-lipoate-binding site is contributed by lysine 134.

This sequence belongs to the LplA family. In terms of assembly, monomer.

It localises to the cytoplasm. It carries out the reaction L-lysyl-[lipoyl-carrier protein] + (R)-lipoate + ATP = N(6)-[(R)-lipoyl]-L-lysyl-[lipoyl-carrier protein] + AMP + diphosphate + H(+). Its pathway is protein modification; protein lipoylation via exogenous pathway; protein N(6)-(lipoyl)lysine from lipoate: step 1/2. It participates in protein modification; protein lipoylation via exogenous pathway; protein N(6)-(lipoyl)lysine from lipoate: step 2/2. Functionally, catalyzes both the ATP-dependent activation of exogenously supplied lipoate to lipoyl-AMP and the transfer of the activated lipoyl onto the lipoyl domains of lipoate-dependent enzymes. The protein is Lipoate-protein ligase A of Aeromonas hydrophila subsp. hydrophila (strain ATCC 7966 / DSM 30187 / BCRC 13018 / CCUG 14551 / JCM 1027 / KCTC 2358 / NCIMB 9240 / NCTC 8049).